Here is a 652-residue protein sequence, read N- to C-terminus: Acetyl-coenzyme A synthetase (652 aa).

CoA is bound by residues 191–194 (RAGR), threonine 311, and asparagine 335. ATP is bound by residues 387 to 389 (GEP), 411 to 416 (DTWWQT), aspartate 500, and arginine 515. A CoA-binding site is contributed by serine 523. An ATP-binding site is contributed by arginine 526. Mg(2+)-binding residues include valine 537, histidine 539, and isoleucine 542. Arginine 584 provides a ligand contact to CoA. Position 609 is an N6-acetyllysine (lysine 609).

Belongs to the ATP-dependent AMP-binding enzyme family. It depends on Mg(2+) as a cofactor. In terms of processing, acetylated. Deacetylation by the SIR2-homolog deacetylase activates the enzyme.

The catalysed reaction is acetate + ATP + CoA = acetyl-CoA + AMP + diphosphate. Functionally, catalyzes the conversion of acetate into acetyl-CoA (AcCoA), an essential intermediate at the junction of anabolic and catabolic pathways. Acs undergoes a two-step reaction. In the first half reaction, Acs combines acetate with ATP to form acetyl-adenylate (AcAMP) intermediate. In the second half reaction, it can then transfer the acetyl group from AcAMP to the sulfhydryl group of CoA, forming the product AcCoA. Enables the cell to use acetate during aerobic growth to generate energy via the TCA cycle, and biosynthetic compounds via the glyoxylate shunt. Acetylates CheY, the response regulator involved in flagellar movement and chemotaxis. This chain is Acetyl-coenzyme A synthetase, found in Escherichia coli O157:H7.